We begin with the raw amino-acid sequence, 437 residues long: Chromosomal replication initiator protein DnaA (437 aa).

The tract at residues methionine 1–valine 72 is domain I, interacts with DnaA modulators. The tract at residues valine 72–serine 99 is domain II. A domain III, AAA+ region region spans residues glycine 100–alanine 320. ATP is bound by residues glycine 144, glycine 146, lysine 147, and threonine 148. The interval lysine 321–isoleucine 437 is domain IV, binds dsDNA.

The protein belongs to the DnaA family. As to quaternary structure, oligomerizes as a right-handed, spiral filament on DNA at oriC.

It is found in the cytoplasm. In terms of biological role, plays an essential role in the initiation and regulation of chromosomal replication. ATP-DnaA binds to the origin of replication (oriC) to initiate formation of the DNA replication initiation complex once per cell cycle. Binds the DnaA box (a 9 base pair repeat at the origin) and separates the double-stranded (ds)DNA. Forms a right-handed helical filament on oriC DNA; dsDNA binds to the exterior of the filament while single-stranded (ss)DNA is stabiized in the filament's interior. The ATP-DnaA-oriC complex binds and stabilizes one strand of the AT-rich DNA unwinding element (DUE), permitting loading of DNA polymerase. After initiation quickly degrades to an ADP-DnaA complex that is not apt for DNA replication. Binds acidic phospholipids. The protein is Chromosomal replication initiator protein DnaA of Mycoplasma genitalium (strain ATCC 33530 / DSM 19775 / NCTC 10195 / G37) (Mycoplasmoides genitalium).